We begin with the raw amino-acid sequence, 577 residues long: MALVDLVRAGGYSIEYPQFSSMAKLKEFPHSEDGKLVRLLSWHEGVGLGGGLFKVSTSSTATGNDGTVVVASNGVRLLRVVNGPIWADMFGALPNSDIDSMPAVAAAYAYAASVNTDLYIGVATYKFKGSTPINIDPSRAGIIGYQGKVRIDCSEFTGSIVFSINSSYSYTPAAYYNNLSPALQGLYVLGAKTSGVDGLLVGRETVGADKSYNGQTEIRECTFDKFDRNIRMGHNSWRFVFYKVNSLNALSPNGILYVPAGLDDSGEILSFYHCQFFDGAGSNIRLSCSSYTMVFNTCSFLNITFFVDSASSATVTCNGCNFENPGSASTRRYVDISAGHTNVFNIIGGSIVTNSNPGQTQALLYVSTNNLLNLVGVTVPYGGHYQQEQELGYHAFIGGAGTVTASGVMLQLRNGAGTCPLHSSLSTFSNWDFGYGNLNAWTVDKGAGTSSVVEYLANAGPKGTGGAMRVAPVSVGTNVSQVQAVTNPGMFSMSCMVNIATTSGNAGQISIGFLDAAGNSIPGGVSANLGTTTGWKVIGKNTLRGKVPIGAKQIRVNVQTVAGADVKYAYLLCNVVK.

This sequence belongs to the K2-specific depolymerase family. As to quaternary structure, homotrimer.

The protein localises to the virion. Its function is as follows. Functions as a receptor binding protein (RBP) and mediates the attachment to the host capsular exopolysaccharides. Displays a depolymerase activity that specifically degrades the K2-type polysaccharides of Klebsiella pneumoniae capsule. The sequence is that of Depolymerase, capsule K2-specific from Klebsiella phage vB_KpnP_KpV74 (Bacteriophage vB_KpnP_KpV74).